Reading from the N-terminus, the 185-residue chain is MLNEIFKNAKSHMDKSIESLRRDFSTLRSGKVSVNILDNVRVDYYGTPTPLNQVGSVIAQDATTIIITPWEKPLIKDIEKSIQEANIGVNPNSDSECVKLFFPPMTQEQRKEIAKNARSMGEKAKVAIRNIRQDANNAIKKLEKDKSITEDENKKALEEIQRYTDEFVKKCDEMLKHKEEEVMKV.

The protein belongs to the RRF family.

The protein resides in the cytoplasm. Functionally, responsible for the release of ribosomes from messenger RNA at the termination of protein biosynthesis. May increase the efficiency of translation by recycling ribosomes from one round of translation to another. The polypeptide is Ribosome-recycling factor (Helicobacter hepaticus (strain ATCC 51449 / 3B1)).